The following is a 401-amino-acid chain: Phosrestin-1 (401 aa).

Belongs to the arrestin family. Inner and outer segments, and the inner plexiform regions of the retina.

Its function is as follows. Undergoes light-induced phosphorylation, probably plays an important role in the photoreceptor transduction. The chain is Phosrestin-1 (Arr2) from Drosophila miranda (Fruit fly).